Consider the following 426-residue polypeptide: Elongation factor Tu, mitochondrial (426 aa).

Residues 1-27 constitute a mitochondrion transit peptide; sequence MFKNLAGSFRAVSRVAFKTRPSLVRSY. Residues 34–230 enclose the tr-type G domain; that stretch reads KPHVNIGTIG…AVDEHIPTPT (197 aa). The interval 43–50 is G1; sequence GHVDHGKT. 43–50 serves as a coordination point for GTP; sequence GHVDHGKT. Positions 84–88 are G2; that stretch reads GITIS. Residues 105 to 108 are G3; it reads DCPG. GTP-binding positions include 105–109 and 160–163; these read DCPGH and NKVD. The interval 160–163 is G4; the sequence is NKVD. The tract at residues 198 to 200 is G5; the sequence is SAL.

The protein belongs to the TRAFAC class translation factor GTPase superfamily. Classic translation factor GTPase family. EF-Tu/EF-1A subfamily.

The protein resides in the mitochondrion. Its pathway is protein biosynthesis; polypeptide chain elongation. Its function is as follows. G-protein that, in its active GTP-bound form, binds to and delivers aminoacyl-tRNA to the A-site of ribosomes during protein biosynthesis. In the presence of a correct codon-anticodon match between the aminoacyl-tRNA and the A-site codon of the ribosome-bound mRNA, the ribosome acts as a GTPase activator and the GTP is hydrolyzed. The inactive GDP-bound form leaves the ribosome and must be recycled before binding another molecule of aminoacyl-tRNA. Required for mitochondrial protein biosynthesis and maintenance of mitochondrial DNA. The chain is Elongation factor Tu, mitochondrial (TUF1) from Meyerozyma guilliermondii (strain ATCC 6260 / CBS 566 / DSM 6381 / JCM 1539 / NBRC 10279 / NRRL Y-324) (Yeast).